The following is a 392-amino-acid chain: Speckle-type POZ protein-like (392 aa).

The MATH domain occupies 31 to 161; that stretch reads KFSYMWTINN…DDKLTLFCEV (131 aa). Positions 200–267 constitute a BTB domain; it reads TDCSFFVRGQ…IYTGRAPNLD (68 aa).

It belongs to the Tdpoz family. In terms of assembly, homodimer. Heterodimer with SPOP. Component of cullin-RING-based BCR (BTB-CUL3-RBX1) E3 ubiquitin-protein ligase complexes containing homodimeric SPOPL or the heterodimer formed by SPOP and SPOPL. Interacts with CUL3 and MACROH2A1.

The protein resides in the nucleus. The protein operates within protein modification; protein ubiquitination. Component of a cullin-RING-based BCR (BTB-CUL3-RBX1) E3 ubiquitin-protein ligase complex that mediates the ubiquitination and subsequent proteasomal degradation of target proteins, but with relatively low efficiency. Cullin-RING-based BCR (BTB-CUL3-RBX1) E3 ubiquitin-protein ligase complexes containing homodimeric SPOPL or the heterodimer formed by SPOP and SPOPL are less efficient than ubiquitin ligase complexes containing only SPOP. May function to down-regulate the activity of cullin-RING-based BCR (BTB-CUL3-RBX1) E3 ubiquitin-protein ligase complexes that contain SPOP. The polypeptide is Speckle-type POZ protein-like (SPOPL) (Homo sapiens (Human)).